We begin with the raw amino-acid sequence, 158 residues long: VIPEGYTQENVAVRGKATQSAQLRGEHAANSEASNAIDGNRDSNFYHGSCTHSSGQANPWWRVDLLQVYTITSVTITNRGDCCGERISGAEINIGQHLASNGVNNPECSVIGSMATGETKTFHCPAPMIGRYVVTYLPTSESLHLCEVEVNVDKPAAA.

The F5/8 type C-like stretch occupies residues 16–148 (KATQSAQLRG…TSESLHLCEV (133 aa)). 4 residues coordinate Ca(2+): Asn-35, Asp-38, Asn-40, and Ser-49. 3 disulfides stabilise this stretch: Cys-50–Cys-146, Cys-82–Cys-83, and Cys-108–Cys-124. Alpha-L-fucose is bound by residues His-52 and Arg-79. A Cell attachment site motif is present at residues 79–81 (RGD). Arg-86 serves as a coordination point for alpha-L-fucose. Ca(2+)-binding residues include Cys-146 and Glu-147.

Belongs to the fucolectin family. As to quaternary structure, homotrimer.

The protein localises to the secreted. Its function is as follows. Acts as a defensive agent. Recognizes blood group fucosylated oligosaccharides including A, B, H and Lewis B-type antigens. Does not recognize Lewis A antigen and has low affinity for monovalent haptens. The polypeptide is Fucolectin (Anguilla anguilla (European freshwater eel)).